A 225-amino-acid chain; its full sequence is Transcriptional regulatory protein CssR (225 aa).

Residues T4 to L117 enclose the Response regulatory domain. D52 carries the 4-aspartylphosphate modification. The segment at residues K129–S224 is a DNA-binding region (ompR/PhoB-type).

In terms of processing, phosphorylated by CssS.

The protein localises to the cytoplasm. Member of the two-component regulatory system CssS/CssR required to control the cellular response to secretion stress. This is Transcriptional regulatory protein CssR (cssR) from Bacillus subtilis (strain 168).